An 84-amino-acid chain; its full sequence is U4-theraphotoxin-Hhn1b (84 aa).

The first 22 residues, 1-22 (MKVTLIAILTCAAVLVLHTTAA), serve as a signal peptide directing secretion. Positions 23–47 (EELEESQLMEVGMPDTELAAVDEER) are excised as a propeptide. Disulfide bonds link C51/C65, C55/C76, and C70/C81.

The protein belongs to the neurotoxin 12 (Hwtx-2) family. 02 (Hwtx-2) subfamily. Expressed by the venom gland.

It is found in the secreted. In terms of biological role, postsynaptic neurotoxin. The chain is U4-theraphotoxin-Hhn1b from Cyriopagopus hainanus (Chinese bird spider).